The primary structure comprises 87 residues: Small ribosomal subunit protein uS17 (87 aa).

This sequence belongs to the universal ribosomal protein uS17 family. As to quaternary structure, part of the 30S ribosomal subunit.

One of the primary rRNA binding proteins, it binds specifically to the 5'-end of 16S ribosomal RNA. The protein is Small ribosomal subunit protein uS17 of Bacillus pumilus (strain SAFR-032).